We begin with the raw amino-acid sequence, 234 residues long: Chromatin remodeling protein EBS (234 aa).

The region spanning 29–144 (KVVRAGDCVL…AATGAFTPDR (116 aa)) is the BAH domain. The PHD-type zinc finger occupies 146-197 (AVYCKCEMPYNPDDLMVQCEGCKDWYHPACVGMTIEEAKKLDHFVCAECSSD).

Belongs to the SHL1/EBS protein family. In terms of assembly, recognizes di- and trimethylated histone H3 at lysine 4 (H3K4me2 and H3K4me3). Interacts with HDA6. Expressed ubiquitously, with higher levels in floral buds.

The protein resides in the nucleus. In terms of biological role, chromatin remodeling factor that binds to methylated histone (e.g. H3K4me2/3) to prevent their acetylation (e.g. H3K9K14Ac), likely by recruiting histone deacetylase (HDAC) complexes, and thus regulating the transcription of target genes. Negative regulator in developmental processes in a gibberellic acid- (GA-) dependent manner, such as germination, flowering induction, and flower organ specification, probably by modulating developmental gene expression. Involved in the chromatin-mediated repression of floral initiation and controls genes regulating flowering. Negatively regulates the expression of the floral integrator FT epigenetically, by preventing high levels of H3 acetylation, thus maintaining an inactive chromatin conformation at FT locus. This chain is Chromatin remodeling protein EBS, found in Arabidopsis thaliana (Mouse-ear cress).